We begin with the raw amino-acid sequence, 131 residues long: Small ribosomal subunit protein uS11 (131 aa).

This sequence belongs to the universal ribosomal protein uS11 family. As to quaternary structure, part of the 30S ribosomal subunit. Interacts with proteins S7 and S18. Binds to IF-3.

Located on the platform of the 30S subunit, it bridges several disparate RNA helices of the 16S rRNA. Forms part of the Shine-Dalgarno cleft in the 70S ribosome. In Chromobacterium violaceum (strain ATCC 12472 / DSM 30191 / JCM 1249 / CCUG 213 / NBRC 12614 / NCIMB 9131 / NCTC 9757 / MK), this protein is Small ribosomal subunit protein uS11.